A 214-amino-acid polypeptide reads, in one-letter code: 3-demethoxyubiquinol 3-hydroxylase (214 aa).

Positions 63, 93, 96, 145, 177, and 180 each coordinate Fe cation.

The protein belongs to the COQ7 family. The cofactor is Fe cation.

The protein resides in the cell membrane. It catalyses the reaction a 5-methoxy-2-methyl-3-(all-trans-polyprenyl)benzene-1,4-diol + AH2 + O2 = a 3-demethylubiquinol + A + H2O. It functions in the pathway cofactor biosynthesis; ubiquinone biosynthesis. Catalyzes the hydroxylation of 2-nonaprenyl-3-methyl-6-methoxy-1,4-benzoquinol during ubiquinone biosynthesis. The protein is 3-demethoxyubiquinol 3-hydroxylase of Psychrobacter cryohalolentis (strain ATCC BAA-1226 / DSM 17306 / VKM B-2378 / K5).